The sequence spans 316 residues: Succinoglycan biosynthesis protein ExoV (316 aa).

It participates in glycan metabolism; exopolysaccharide biosynthesis. The protein is Succinoglycan biosynthesis protein ExoV (exoV) of Rhizobium meliloti (strain 1021) (Ensifer meliloti).